The sequence spans 387 residues: Probable nitrate transporter NarT (387 aa).

12 consecutive transmembrane segments (helical) span residues 14–34 (TLSL…MPFI), 45–65 (ISVI…PFGY), 69–89 (IVGA…PIFL), 97–117 (GMLM…SVGV), 137–157 (GVGN…AGAI), 161–181 (NTVR…FFLG), 211–231 (WYFI…NFLV), 246–266 (GIFI…GDKF), 268–288 (AVQA…ILSL), 294–314 (LFTI…GLIF), 330–350 (GIVS…ITFV), and 358–378 (HLAF…MIHL).

The protein belongs to the major facilitator superfamily. Nitrate/nitrite porter (TC 2.A.1.8) family.

The protein localises to the cell membrane. In terms of biological role, probably required for nitrate uptake under anoxic conditions. Also possibly involved in excretion of nitrite produced by the dissimilatory reduction of nitrate. The protein is Probable nitrate transporter NarT (narT) of Staphylococcus epidermidis (strain ATCC 35984 / DSM 28319 / BCRC 17069 / CCUG 31568 / BM 3577 / RP62A).